We begin with the raw amino-acid sequence, 130 residues long: Small ribosomal subunit protein uS11 (130 aa).

It belongs to the universal ribosomal protein uS11 family. Part of the 30S ribosomal subunit. Interacts with proteins S7 and S18. Binds to IF-3.

Functionally, located on the platform of the 30S subunit, it bridges several disparate RNA helices of the 16S rRNA. Forms part of the Shine-Dalgarno cleft in the 70S ribosome. The sequence is that of Small ribosomal subunit protein uS11 from Xanthomonas oryzae pv. oryzae (strain MAFF 311018).